The following is a 245-amino-acid chain: Uridylate kinase (245 aa).

16-19 (KLSG) contacts ATP. Position 58 (G58) interacts with UMP. Positions 59 and 63 each coordinate ATP. Residues D78 and 139-146 (TGNPFFTT) contribute to the UMP site. ATP is bound by residues T166, Y172, and D175.

The protein belongs to the UMP kinase family. As to quaternary structure, homohexamer.

It is found in the cytoplasm. The enzyme catalyses UMP + ATP = UDP + ADP. It participates in pyrimidine metabolism; CTP biosynthesis via de novo pathway; UDP from UMP (UMPK route): step 1/1. Its activity is regulated as follows. Inhibited by UTP. Functionally, catalyzes the reversible phosphorylation of UMP to UDP. This chain is Uridylate kinase, found in Idiomarina loihiensis (strain ATCC BAA-735 / DSM 15497 / L2-TR).